The chain runs to 328 residues: Aryl-hydrocarbon-interacting protein-like 1 (328 aa).

One can recognise a PPIase FKBP-type domain in the interval 53 to 145 (KQVGQPMNII…DLDELQKEPQ (93 aa)). TPR repeat units follow at residues 178–211 (VPLLHGEGNRLYKLGRYDQAATKYQEAIVCLRNL), 230–263 (NTLILNYCQCLLKKEEYYEVLEHTSDILRHHPGI), and 264–297 (VKAYYMRARAHAEVWNAEEAKADLEKVLELEPSM).

In terms of assembly, interacts with NUB1. As to expression, highly expressed in retina.

The protein localises to the cytoplasm. It localises to the nucleus. Functionally, may be important in protein trafficking and/or protein folding and stabilization. The protein is Aryl-hydrocarbon-interacting protein-like 1 (Aipl1) of Rattus norvegicus (Rat).